The primary structure comprises 214 residues: Large ribosomal subunit protein bL25 (214 aa).

The tract at residues 178–214 (VEPEEEELPETDEEGEGAEGEAAEAAEGESAEGESEE) is disordered. The segment covering 179–214 (EPEEEELPETDEEGEGAEGEAAEAAEGESAEGESEE) has biased composition (acidic residues).

Belongs to the bacterial ribosomal protein bL25 family. CTC subfamily. In terms of assembly, part of the 50S ribosomal subunit; part of the 5S rRNA/L5/L18/L25 subcomplex. Contacts the 5S rRNA. Binds to the 5S rRNA independently of L5 and L18.

Functionally, this is one of the proteins that binds to the 5S RNA in the ribosome where it forms part of the central protuberance. The sequence is that of Large ribosomal subunit protein bL25 from Corynebacterium jeikeium (strain K411).